A 185-amino-acid chain; its full sequence is MTRHCDVSIPDSPEPPFPITTSFVDVIAGFGRGSAELGIPTANVPIDDLPKIVEQLDTGVYFGWCKVRMAKDRDTKVEQRPDGREVQYNNGTLLNDEDLAVLPVVLSVGWNPFYQNKNKTVELHIIHKFSDNFYGAQIKFNFLGYIRPELDYTTKDALIADIHTDIEIAKEKLQLPGYRKLKDTL.

Mg(2+) is bound by residues threonine 41 and asparagine 43. Glutamate 122 acts as the Nucleophile in catalysis.

It belongs to the flavokinase family. Requires Zn(2+) as cofactor. Mg(2+) is required as a cofactor.

It catalyses the reaction riboflavin + ATP = FMN + ADP + H(+). The protein operates within cofactor biosynthesis; FMN biosynthesis; FMN from riboflavin (ATP route): step 1/1. In terms of biological role, catalyzes the phosphorylation of riboflavin (vitamin B2) to form flavin mononucleotide (FMN) coenzyme. The chain is Riboflavin kinase (FMN1) from Kluyveromyces lactis (strain ATCC 8585 / CBS 2359 / DSM 70799 / NBRC 1267 / NRRL Y-1140 / WM37) (Yeast).